Here is a 479-residue protein sequence, read N- to C-terminus: Adenosylhomocysteinase (479 aa).

3 residues coordinate substrate: Thr-56, Asp-133, and Glu-199. 200–202 provides a ligand contact to NAD(+); that stretch reads TTT. Residues Lys-229 and Asp-233 each coordinate substrate. NAD(+) contacts are provided by residues Asn-234, 263–268, Glu-286, Asn-321, 342–344, and Asn-390; these read GYGDVG and IGH.

This sequence belongs to the adenosylhomocysteinase family. In terms of assembly, homotetramer. The cofactor is NAD(+).

The catalysed reaction is S-adenosyl-L-homocysteine + H2O = L-homocysteine + adenosine. It participates in amino-acid biosynthesis; L-homocysteine biosynthesis; L-homocysteine from S-adenosyl-L-homocysteine: step 1/1. Adenosylhomocysteine is a competitive inhibitor of S-adenosyl-L-methionine-dependent methyl transferase reactions; therefore adenosylhomocysteinase may play a key role in the control of methylations via regulation of the intracellular concentration of adenosylhomocysteine. The chain is Adenosylhomocysteinase from Plasmodium yoelii yoelii.